The following is a 568-amino-acid chain: TNF receptor-associated factor 3 (568 aa).

The segment at 1–28 (MESSKKMDSPGALQTNPPLKLHTDRSAG) is disordered. Ser9 carries the phosphoserine modification. A Glycyl cysteine thioester (Cys-Gly) (interchain with G-Cter in ubiquitin) cross-link involves residue Cys56. The RING-type zinc-finger motif lies at 68-77 (CGHRFCESCM). A Glycyl cysteine thioester (Cys-Gly) (interchain with G-Cter in ubiquitin) cross-link involves residue Cys124. 2 TRAF-type zinc fingers span residues 135-190 (VHLK…IALQ) and 191-249 (KHED…QQIK). Lys168 participates in a covalent cross-link: Glycyl lysine isopeptide (Lys-Gly) (interchain with G-Cter in ubiquitin). A coiled-coil region spans residues 267–338 (SNSLEKKVSL…KLKELDKEIR (72 aa)). A Glycyl lysine isopeptide (Lys-Gly) (interchain with G-Cter in ubiquitin) cross-link involves residue Lys329. The segment at 392 to 415 (LSVHDIRLADMDLRFQVLETASYN) is (Microbial infection) Interaction with glycoprotein N of Andes and New York hantaviruses. One can recognise an MATH domain in the interval 415–560 (NGVLIWKIRD…DDTIFIKVIV (146 aa)).

Belongs to the TNF receptor-associated factor family. A subfamily. Homotrimer. Heterotrimer with TRAF2 and TRAF5. Interacts with LTBR/TNFRSF3, TNFRSF4, TNFRSF5/CD40, TNFRSF8/CD30, TNFRSF13C TNFRSF17/BCMA, TLR4 and EDAR. Interacts with MAP3K5, MAP3K14, TRAIP/TRIP, TDP2/TTRAP, TANK/ITRAF and TRAF3IP1. Interaction with TNFRSF5/CD40 is modulated by TANK/ITRAF, which competes for the same binding site. Interacts with TICAM1. Interacts with TRAFD1. Interacts with OTUB1, OTUB2 and OTUD5. Interacts with RNF216, OPTN and TBK1. Identified in a complex with TRAF2, MAP3K14 and BIRC3. Interacts with BIRC2 and BIRC3. Upon exposure to bacterial lipopolysaccharide (LPS), recruited to a transient complex containing TLR4, TRAF3, TRAF6, IKBKG, MAP3K7, MYD88, TICAM1, BIRC2, BIRC3 and UBE2N. Interacts (via RING-type zinc finger domain) with SRC. Interacts with CARD14. Interacts (via MATH domain) with PTPN22; the interaction promotes TRAF3 polyubiquitination. Interacts with MAVS. Directly interacts with DDX3X; this interaction stimulates TRAF3 'Lys-63' ubiquitination. Interacts with IRF3. Interacts with IKBKE in the course of Sendai virus infection. Interacts with TRIM35. Interacts with GAPDH; promoting TRAF3 ubiquitination. Interacts with PPP3CA and PPP3CB. Interacts with ATP1B1; promoting TRAF3 ubiquitination. Interacts with RALGDS. Interacts with FBXO11. As to quaternary structure, (Microbial infection) Interacts (via N-terminus) with New York hantavirus glycoprotein N (via C-terminus); this interaction inhibits the formation of TRAF3-TBK1 complexes. In terms of assembly, (Microbial infection) Interacts with Andes hantavirus glycoprotein N (via C-terminus); this interaction inhibits the formation of TRAF3-TBK1 complexes. (Microbial infection) Interacts with Tula hantavirus glycoprotein N (via C-terminus); this interaction inhibits the formation of TRAF3-TBK1 complexes. As to quaternary structure, (Microbial infection) Interacts with Epstein-Barr virus protein LMP1. Undergoes 'Lys-48'-linked polyubiquitination, leading to its proteasomal degradation in response to signaling by TNFSF13B, TLR4 or through CD40. 'Lys-48'-linked polyubiquitinated form is deubiquitinated by OTUD7B, preventing TRAF3 proteolysis and over-activation of non-canonical NF-kappa-B. Undergoes 'Lys-63'-linked ubiquitination during early stages of virus infection, and 'Lys-48'-linked ubiquitination during later stages. Undergoes both 'Lys-48'-linked and 'Lys-63'-linked ubiquitination in response to TLR3 and TLR4 signaling. 'Lys-63'-linked ubiquitination can be mediated by TRIM35. Deubiquitinated by OTUB1, OTUB2 and OTUD5. Undergoes 'Lys-63'-linked deubiquitination by MYSM1 to terminate the pattern-recognition receptors/PRRs pathways. Also undergoes 'Lys-29'-linked ubiquitination on Cys-56 and Cys-124 by NEDD4L; leading to increased 'Lys-48'- and 'Lys-63'-linked ubiquitination as well as increased binding to TBK1. TLR4 signals emanating from bacteria containing vesicles trigger 'Lys-33'-linked polyubiquitination that promotes the assembly of the exocyst complex thereby connecting innate immune signaling to the cellular trafficking apparatus. Deubiquitinated by USP25 during viral infection, leading to TRAF3 stabilization and type I interferon production. Ubiquitinated at Lys-329 by the SCF(FBXL2) complex, leading to its degradation by the proteasome. 'Lys-63'-linked ubiquitination by FBXO11 in a NEDD8-dependent manner promotes the amplification of IFN-I signaling. In terms of processing, (Microbial infection) Cleaved by enterovirus D68 protease 2A; leading to inhibition of NF-kappa-B or IFN-beta triggered by TRAF3.

The protein localises to the cytoplasm. It localises to the endosome. It is found in the mitochondrion. The catalysed reaction is S-ubiquitinyl-[E2 ubiquitin-conjugating enzyme]-L-cysteine + [acceptor protein]-L-lysine = [E2 ubiquitin-conjugating enzyme]-L-cysteine + N(6)-ubiquitinyl-[acceptor protein]-L-lysine.. Cytoplasmic E3 ubiquitin ligase that regulates various signaling pathways, such as the NF-kappa-B, mitogen-activated protein kinase (MAPK) and interferon regulatory factor (IRF) pathways, and thus controls a lot of biological processes in both immune and non-immune cell types. In TLR and RLR signaling pathways, acts as an E3 ubiquitin ligase promoting the synthesis of 'Lys-63'-linked polyubiquitin chains on several substrates such as ASC that lead to the activation of the type I interferon response or the inflammasome. Following the activation of certain TLRs such as TLR4, acts as a negative NF-kappa-B regulator, possibly to avoid unregulated inflammatory response, and its degradation via 'Lys-48'-linked polyubiquitination is required for MAPK activation and production of inflammatory cytokines. Alternatively, when TLR4 orchestrates bacterial expulsion, TRAF3 undergoes 'Lys-33'-linked polyubiquitination and subsequently binds to RALGDS, mobilizing the exocyst complex to rapidly expel intracellular bacteria back for clearance. Also acts as a constitutive negative regulator of the alternative NF-kappa-B pathway, which controls B-cell survival and lymphoid organ development. Required for normal antibody isotype switching from IgM to IgG. Plays a role T-cell dependent immune responses. Down-regulates proteolytic processing of NFKB2, and thereby inhibits non-canonical activation of NF-kappa-B. Promotes ubiquitination and proteasomal degradation of MAP3K14. This chain is TNF receptor-associated factor 3, found in Homo sapiens (Human).